The primary structure comprises 291 residues: 4-diphosphocytidyl-2-C-methyl-D-erythritol kinase (291 aa).

Lys11 is a catalytic residue. Residue 95–105 (PVAAGMAGGSS) participates in ATP binding. Asp137 is an active-site residue.

The protein belongs to the GHMP kinase family. IspE subfamily.

It carries out the reaction 4-CDP-2-C-methyl-D-erythritol + ATP = 4-CDP-2-C-methyl-D-erythritol 2-phosphate + ADP + H(+). It functions in the pathway isoprenoid biosynthesis; isopentenyl diphosphate biosynthesis via DXP pathway; isopentenyl diphosphate from 1-deoxy-D-xylulose 5-phosphate: step 3/6. In terms of biological role, catalyzes the phosphorylation of the position 2 hydroxy group of 4-diphosphocytidyl-2C-methyl-D-erythritol. The sequence is that of 4-diphosphocytidyl-2-C-methyl-D-erythritol kinase from Lachnoclostridium phytofermentans (strain ATCC 700394 / DSM 18823 / ISDg) (Clostridium phytofermentans).